The sequence spans 736 residues: Prolyl 3-hydroxylase 3 (736 aa).

The N-terminal stretch at 1 to 20 is a signal peptide; that stretch reads MLRLLRPLLLLLLLPPPGSP. TPR repeat units follow at residues 37-70, 154-187, and 216-249; these read PDLL…QAAL, REPY…NPMH, and HWAA…SLAQ. The interval 253 to 275 is disordered; it reads CRADCEGPEEQQGAEEEEDGAAS. Residues 258 to 272 are compositionally biased toward acidic residues; it reads EGPEEQQGAEEEEDG. The stretch at 316 to 349 is one TPR 4 repeat; it reads PNQLRRLHEAHAQVGNLSQAIENVLSVLLFYPED. Asparagine 331 and asparagine 462 each carry an N-linked (GlcNAc...) asparagine glycan. The region spanning 561-675 is the Fe2OG dioxygenase domain; that stretch reads THLVCRSAIE…RCALALWHTW (115 aa). Residues histidine 584, aspartate 586, and histidine 656 each contribute to the Fe cation site. Arginine 666 is a catalytic residue. The stretch at 681–709 forms a coiled coil; that stretch reads EQEWIEAKELLQESQEEEEEEEEEMPSKD. The interval 689–736 is disordered; sequence ELLQESQEEEEEEEEEMPSKDPSPEPPSRRHQRVQDKTGRAPRVREEL. The span at 694 to 704 shows a compositional bias: acidic residues; the sequence is SQEEEEEEEEE. A compositionally biased stretch (basic and acidic residues) spans 721-736; the sequence is RVQDKTGRAPRVREEL. The Prevents secretion from ER signature appears at 733 to 736; it reads REEL.

This sequence belongs to the leprecan family. Identified in a complex with PLOD1 and P3H4. Requires Fe cation as cofactor. It depends on L-ascorbate as a cofactor. Detected in fetal cartilage (at protein level). Weak expression in heart, lung, ovary and skeletal muscle.

The protein localises to the endoplasmic reticulum. It catalyses the reaction L-prolyl-[collagen] + 2-oxoglutarate + O2 = trans-3-hydroxy-L-prolyl-[collagen] + succinate + CO2. Part of a complex composed of PLOD1, P3H3 and P3H4 that catalyzes hydroxylation of lysine residues in collagen alpha chains and is required for normal assembly and cross-linkling of collagen fibrils. Required for normal hydroxylation of lysine residues in type I collagen chains in skin, bone, tendon, aorta and cornea. Required for normal skin stability via its role in hydroxylation of lysine residues in collagen alpha chains and in collagen fibril assembly. Apparently not required for normal prolyl 3-hydroxylation on collagen chains, possibly because it functions redundantly with other prolyl 3-hydroxylases. The chain is Prolyl 3-hydroxylase 3 from Homo sapiens (Human).